Here is a 681-residue protein sequence, read N- to C-terminus: Transcriptional regulator prz1 (681 aa).

Positions 1-15 (MERQRSEEANRRFKD) are enriched in basic and acidic residues. Disordered regions lie at residues 1 to 29 (MERQ…SKPD), 66 to 96 (NPSK…DSYP), 340 to 372 (SHQS…NSPF), 410 to 433 (PQIN…ANPL), and 520 to 563 (KIEN…AKSE). Composition is skewed to polar residues over residues 66–86 (NPSK…FKTS) and 340–358 (SHQS…LNSE). Residues 416-428 (PSSPSKSQSGPSL) show a composition bias toward low complexity. Polar residues predominate over residues 528 to 549 (SNDYLSVRNTRPRSRSLNSLVG). A phosphoserine mark is found at Ser-543 and Ser-546. The segment covering 550–559 (NKSENSSSSK) has biased composition (low complexity). 2 C2H2-type zinc fingers span residues 570 to 594 (YVCT…MNTH) and 600 to 622 (FQCS…EQLH). The segment at 628-650 (FACVTCNQRFARMDALNRHYKSE) adopts a C2H2-type 3; degenerate zinc-finger fold. Positions 662-681 (RGIQVPPSRKTAVASTSKQK) are disordered.

This sequence belongs to the EGR C2H2-type zinc-finger protein family. Post-translationally, phosphorylated. Dephosphorylated by calcineurin which leads to rapid translocation from the cytoplasm to the nucleus.

Its subcellular location is the nucleus. The protein localises to the cytoplasm. Functionally, involved in the regulation of calcium ion homeostasis. Binds to the calcineurin-dependent response element. Transcriptionally regulates pmc1. The polypeptide is Transcriptional regulator prz1 (prz1) (Schizosaccharomyces pombe (strain 972 / ATCC 24843) (Fission yeast)).